We begin with the raw amino-acid sequence, 241 residues long: Golgi-associated RAB2 interactor protein 6 (241 aa).

Belongs to the GARIN family.

The chain is Golgi-associated RAB2 interactor protein 6 from Homo sapiens (Human).